The following is a 389-amino-acid chain: MARFLVALLATTLVAVQAGGQLGHAAPATAEVFWRAVLPHSPLPDAVLRLLKQPAAGVELLTEATSFVRDAEDRPPFDYRDYSRSPPDDEPSKSTGAASGARDFDYDDYSGGDKLRGAASGARDFDYDDYSGADKLRGATDEYKAPSSSLAGNGASMARGGKAETTTVFFHEEAVRVGKRLPFRFPPATPAALGFLPRQVADSVPFTTAALPGVLATFGVASDSATVASMEATLRACESPTIAGESKFCATSLEALVERAMEVLGTRDIRPVTSTLPRAGAPLQTYTVRSVRPVEGGPVFVACHDEAYPYTVYRCHTTGPSRAYMVDMEGARGGDAVTIATVCHTDTSLWNPEHVSFKLLGTKPGGTPVCHLMPYGHIIWAKNVNRSPA.

The first 20 residues, 1 to 20 (MARFLVALLATTLVAVQAGG), serve as a signal peptide directing secretion. Residues 73 to 92 (DRPPFDYRDYSRSPPDDEPS) are compositionally biased toward basic and acidic residues. Residues 73–105 (DRPPFDYRDYSRSPPDDEPSKSTGAASGARDFD) form a disordered region. Positions 169 to 383 (FFHEEAVRVG…PYGHIIWAKN (215 aa)) constitute a BURP domain.

Specifically expressed in anthers, in the tapetum and microspores (at protein level).

Its function is as follows. Required for pollen development. Probably synthesized in the tapetum, packaged in Ubisch bodies and transported at appropriate stages to the micropsores. The protein is Protein RAFTIN 1A (RAFTIN1A) of Triticum aestivum (Wheat).